Consider the following 336-residue polypeptide: Toluate 1,2-dioxygenase electron transfer component (336 aa).

The 95-residue stretch at 3–97 (HKVATDFEDG…DCVIRVPAAS (95 aa)) folds into the 2Fe-2S ferredoxin-type domain. [2Fe-2S] cluster is bound by residues C40, C45, C48, and C81. The interval 99 to 336 (VCKTQQAGYQ…FYYEKFAASA (238 aa)) is ferredoxin-reductase. The region spanning 104 to 204 (QAGYQAAISN…AGPLGAFYLR (101 aa)) is the FAD-binding FR-type domain.

Belongs to the bacterial ring-hydroxylating dioxygenase ferredoxin reductase family. In terms of assembly, this dioxygenase system consists of three proteins: the two subunits of the hydroxylase component (XylX and XylY), and an electron transfer component (XylZ). It depends on FAD as a cofactor. [2Fe-2S] cluster is required as a cofactor.

It carries out the reaction 2 reduced [2Fe-2S]-[ferredoxin] + NAD(+) + H(+) = 2 oxidized [2Fe-2S]-[ferredoxin] + NADH. Electron transfer component of toluate 1,2-dioxygenase system. In Pseudomonas putida (Arthrobacter siderocapsulatus), this protein is Toluate 1,2-dioxygenase electron transfer component (xylZ).